A 783-amino-acid polypeptide reads, in one-letter code: Cyclic di-GMP phosphodiesterase NbdA (783 aa).

One can recognise an MHYT domain in the interval 81–274 (YSPSLVALAF…FTGMAALVLS (194 aa)). Helical transmembrane passes span 84-104 (SLVA…LDMV), 120-140 (IGAF…MLAF), 150-170 (LPIT…TMYM), 176-196 (FGLL…AAMH), 215-235 (LFAL…AAVP), 255-275 (LLAG…VLSV), and 292-312 (LGWL…WAAW). Residues 313-783 (SEKQRERRLS…APPLRSLNQA (471 aa)) lie on the Cytoplasmic side of the membrane. The GGDEF domain maps to 375 to 507 (KGLAVMFLDL…GRNNAQFFSR (133 aa)). The region spanning 516–770 (ELQMEEELRQ…ALEEFLRAYR (255 aa)) is the EAL domain. 3',3'-c-di-GMP-binding residues include Gln-537, Glu-551, Arg-555, Asn-610, and Asn-615. Glu-551 provides a ligand contact to Mg(2+). Asn-610 is a Mg(2+) binding site. The Mg(2+) site is built by Glu-642, Asp-672, and Asp-673. Residue Asp-672 coordinates 3',3'-c-di-GMP. Arg-696 contributes to the 3',3'-c-di-GMP binding site. Residue Glu-729 coordinates Mg(2+). Residues Glu-732 and Tyr-751 each coordinate 3',3'-c-di-GMP.

It depends on Mg(2+) as a cofactor.

It is found in the cell inner membrane. It catalyses the reaction 3',3'-c-di-GMP + H2O = 5'-phosphoguanylyl(3'-&gt;5')guanosine + H(+). PDE activity is stimulated by GTP. It could also be stimulated by NO. Its function is as follows. Displays c-di-GMP-specific phosphodiesterase (PDE) activity. Seems to play a specific role in nitric oxide (NO)-induced biofilm dispersion. Enhanced NbdA synthesis in the presence of NO increases PDE activity, leading to reduced cellular c-di-GMP levels and biofilm dispersion. Does not show diguanylate cyclase (DGC) activity. The protein is Cyclic di-GMP phosphodiesterase NbdA of Pseudomonas aeruginosa (strain ATCC 15692 / DSM 22644 / CIP 104116 / JCM 14847 / LMG 12228 / 1C / PRS 101 / PAO1).